Reading from the N-terminus, the 231-residue chain is Urease accessory protein UreF (231 aa).

This sequence belongs to the UreF family. As to quaternary structure, ureD, UreF and UreG form a complex that acts as a GTP-hydrolysis-dependent molecular chaperone, activating the urease apoprotein by helping to assemble the nickel containing metallocenter of UreC. The UreE protein probably delivers the nickel.

It is found in the cytoplasm. In terms of biological role, required for maturation of urease via the functional incorporation of the urease nickel metallocenter. The chain is Urease accessory protein UreF from Marinobacter nauticus (strain ATCC 700491 / DSM 11845 / VT8) (Marinobacter aquaeolei).